A 285-amino-acid polypeptide reads, in one-letter code: 4-hydroxybenzoate octaprenyltransferase (285 aa).

The next 7 helical transmembrane spans lie at G20–L39, A92–W112, F137–V157, E159–Y179, Y206–G226, Y228–H248, and A260–A280.

This sequence belongs to the UbiA prenyltransferase family. The cofactor is Mg(2+).

It is found in the cell inner membrane. It carries out the reaction all-trans-octaprenyl diphosphate + 4-hydroxybenzoate = 4-hydroxy-3-(all-trans-octaprenyl)benzoate + diphosphate. It participates in cofactor biosynthesis; ubiquinone biosynthesis. Its function is as follows. Catalyzes the prenylation of para-hydroxybenzoate (PHB) with an all-trans polyprenyl group. Mediates the second step in the final reaction sequence of ubiquinone-8 (UQ-8) biosynthesis, which is the condensation of the polyisoprenoid side chain with PHB, generating the first membrane-bound Q intermediate 3-octaprenyl-4-hydroxybenzoate. This Pseudoalteromonas atlantica (strain T6c / ATCC BAA-1087) protein is 4-hydroxybenzoate octaprenyltransferase.